A 467-amino-acid polypeptide reads, in one-letter code: MKKHIFEDIILQNALNFTEEVVEIFGDLLNKGMNITELVARIKELTDKLGRGAIEAIIEELDRIIKEDKRRKEKWVVERKDKKRLTTVLGDIEYERTYYKSKEDGRYTYLVDDALEIGRHDRIEKGVKIKLVENAIEESYERSSKKACPEELSKQTVLNAIREIGEVEVKREIKEKKEVRVLYIEADEDHVPLQDGRDETPRLVYIHEGREEKNGRNVLKNVYYKAYVGEKPEDIWIDVANYIEDNYKEEKIEKIYIAGDGAPWIKEGLKWILKSRFVLDRYHLNKYVLKATSKEPKYRDKIWRAINEGDKERVKKVFDELIKAAEEEREKEKIKEAKKYILNNWEGIKIYNEDEDVIGCSAEGHISHVFSARLSRNPLGWSREGLKLMAKLRVFSKNGGDLREVEWGKKKNINAGSYKLTKKQIKEAVRRVKTSTNEKINNITVLNIGKVTPIYRVLRALKYAQVI.

Belongs to the UPF0236 family.

This is UPF0236 protein TTE0610/TTE0881/TTE1053/TTE2432 from Caldanaerobacter subterraneus subsp. tengcongensis (strain DSM 15242 / JCM 11007 / NBRC 100824 / MB4) (Thermoanaerobacter tengcongensis).